Reading from the N-terminus, the 495-residue chain is Glutamate--tRNA ligase 1 (495 aa).

The 'HIGH' region motif lies at 10 to 20 (PSPTGALHMGG). The 'KMSKS' region signature appears at 251-255 (KLSKR). ATP is bound at residue Lys254.

This sequence belongs to the class-I aminoacyl-tRNA synthetase family. Glutamate--tRNA ligase type 1 subfamily. Monomer.

It localises to the cytoplasm. The catalysed reaction is tRNA(Glu) + L-glutamate + ATP = L-glutamyl-tRNA(Glu) + AMP + diphosphate. In terms of biological role, catalyzes the attachment of glutamate to tRNA(Glu) in a two-step reaction: glutamate is first activated by ATP to form Glu-AMP and then transferred to the acceptor end of tRNA(Glu). This chain is Glutamate--tRNA ligase 1, found in Syntrophomonas wolfei subsp. wolfei (strain DSM 2245B / Goettingen).